The sequence spans 544 residues: MIARRMLCARPWGPSCVVCALCGALAALVPAVGAQEQAVPAPGTPAPPAHTASEAVPPAPEPRAEGEQPSPLVPTALPVPGGAVAARAAPGTVGPRLWEQLLQWRVQHGDEHQAPQMAYEIAANNYDIALVKSIVDLRMGTGHIHHNLNGNGAGGMANGTPTLSPYVHLFFPTYQNLSLKADIAIKTNTPSADVTALFGMDLYSKVRRQHQLQVRRARNSMLDAFAAHLRGQHAAREAFLAELDELLSAYSTLLEAQVTEQECTRLVRTMRIQRYQAHSVKLRSATLKHARAERVARRARKTFTALYQDFVRKCGAFEGNDPETFMLHLAQVVPQEPVSSTALLSVENDWEFLKNREDLETQAEARAVDAISYGFNVESGVGSEGKSLKRILANVRMDFPGGGFWLGLNLPYPQWSRVEVKFRLTWDPLSIKYQELSRQTLQLHERLSALKLQDAYEASERKVLGLRHTAESLGWEQEAALTELNILRRSAQTHQKWLERGAIGAHQHARAQHAYLQALITLAKINIKILKFNLETASSFRPVL.

A signal peptide spans 1–34; sequence MIARRMLCARPWGPSCVVCALCGALAALVPAVGA. The tract at residues 38-69 is disordered; the sequence is AVPAPGTPAPPAHTASEAVPPAPEPRAEGEQP.

Belongs to the TP096X family.

This is an uncharacterized protein from Treponema pallidum (strain Nichols).